The chain runs to 291 residues: ATP phosphoribosyltransferase (291 aa).

It belongs to the ATP phosphoribosyltransferase family. Long subfamily. Mg(2+) serves as cofactor.

Its subcellular location is the cytoplasm. The enzyme catalyses 1-(5-phospho-beta-D-ribosyl)-ATP + diphosphate = 5-phospho-alpha-D-ribose 1-diphosphate + ATP. It participates in amino-acid biosynthesis; L-histidine biosynthesis; L-histidine from 5-phospho-alpha-D-ribose 1-diphosphate: step 1/9. With respect to regulation, feedback inhibited by histidine. In terms of biological role, catalyzes the condensation of ATP and 5-phosphoribose 1-diphosphate to form N'-(5'-phosphoribosyl)-ATP (PR-ATP). Has a crucial role in the pathway because the rate of histidine biosynthesis seems to be controlled primarily by regulation of HisG enzymatic activity. The sequence is that of ATP phosphoribosyltransferase from Desulfosudis oleivorans (strain DSM 6200 / JCM 39069 / Hxd3) (Desulfococcus oleovorans).